The following is a 98-amino-acid chain: MSMMYFNIFMAFTVSLVGLLMYRSHLMSSLLCLEGMMLSLFVMMSVTILNNHFTLASMAPIILLVFAACEAALGLSLLVMVSNTYGTDYVQNLNLLQC.

The next 3 membrane-spanning stretches (helical) occupy residues 1 to 21, 29 to 49, and 61 to 81; these read MSMM…GLLM, SLLC…VTIL, and IILL…LVMV.

Belongs to the complex I subunit 4L family. As to quaternary structure, core subunit of respiratory chain NADH dehydrogenase (Complex I) which is composed of 45 different subunits.

The protein localises to the mitochondrion inner membrane. It catalyses the reaction a ubiquinone + NADH + 5 H(+)(in) = a ubiquinol + NAD(+) + 4 H(+)(out). Core subunit of the mitochondrial membrane respiratory chain NADH dehydrogenase (Complex I) which catalyzes electron transfer from NADH through the respiratory chain, using ubiquinone as an electron acceptor. Part of the enzyme membrane arm which is embedded in the lipid bilayer and involved in proton translocation. The sequence is that of NADH-ubiquinone oxidoreductase chain 4L (MT-ND4L) from Zalophus californianus (California sealion).